The following is an 87-amino-acid chain: Sodium channel neurotoxin MeuNaTxalpha-5* (87 aa).

The first 19 residues, 1-19, serve as a signal peptide directing secretion; that stretch reads MNYLILISFALLVITGVES. Positions 21–85 constitute an LCN-type CS-alpha/beta domain; sequence RDAYIAKPHN…VPIRIPGKCH (65 aa). 4 disulfide bridges follow: C31–C84, C35–C57, C43–C67, and C47–C69. The propeptide at 86-87 is removed by a carboxypeptidase; the sequence is RR.

This sequence belongs to the long (4 C-C) scorpion toxin superfamily. Sodium channel inhibitor family. Alpha subfamily. Expressed by the venom gland.

The protein localises to the secreted. Its function is as follows. Alpha toxins bind voltage-independently at site-3 of sodium channels (Nav) and inhibit the inactivation of the activated channels, thereby blocking neuronal transmission. This toxin inhibits inactivation of Nav1.6/SCN8A (EC(50)=790 nM) and drosophila DmNav1 (EC(50)=280 nM). The toxin (1 uM) does not significantly shift the midpoint of activation at the two channels, but induces a significant depolarizing shift in the V(1/2) of inactivation of the channels. Has antimicrobial activity. The chain is Sodium channel neurotoxin MeuNaTxalpha-5* from Mesobuthus eupeus (Lesser Asian scorpion).